The chain runs to 269 residues: 4-hydroxy-tetrahydrodipicolinate reductase (269 aa).

11-16 (GPIGRM) contacts NAD(+). Lys39 contributes to the NADP(+) binding site. NAD(+)-binding positions include 101–103 (GTT) and 125–128 (ASNF). Catalysis depends on His158, which acts as the Proton donor/acceptor. His159 is a binding site for (S)-2,3,4,5-tetrahydrodipicolinate. Catalysis depends on Lys162, which acts as the Proton donor. Residue 168–169 (GT) coordinates (S)-2,3,4,5-tetrahydrodipicolinate.

The protein belongs to the DapB family. As to quaternary structure, homotetramer.

It localises to the cytoplasm. It catalyses the reaction (S)-2,3,4,5-tetrahydrodipicolinate + NAD(+) + H2O = (2S,4S)-4-hydroxy-2,3,4,5-tetrahydrodipicolinate + NADH + H(+). It carries out the reaction (S)-2,3,4,5-tetrahydrodipicolinate + NADP(+) + H2O = (2S,4S)-4-hydroxy-2,3,4,5-tetrahydrodipicolinate + NADPH + H(+). Its pathway is amino-acid biosynthesis; L-lysine biosynthesis via DAP pathway; (S)-tetrahydrodipicolinate from L-aspartate: step 4/4. Catalyzes the conversion of 4-hydroxy-tetrahydrodipicolinate (HTPA) to tetrahydrodipicolinate. The polypeptide is 4-hydroxy-tetrahydrodipicolinate reductase (Buchnera aphidicola subsp. Acyrthosiphon pisum (strain 5A)).